The chain runs to 577 residues: Arginine--tRNA ligase (577 aa).

Positions 122–132 (PNVAKEMHVGH) match the 'HIGH' region motif.

This sequence belongs to the class-I aminoacyl-tRNA synthetase family. Monomer.

The protein resides in the cytoplasm. It catalyses the reaction tRNA(Arg) + L-arginine + ATP = L-arginyl-tRNA(Arg) + AMP + diphosphate. The sequence is that of Arginine--tRNA ligase from Shigella flexneri serotype 5b (strain 8401).